A 1211-amino-acid chain; its full sequence is A disintegrin and metalloproteinase with thrombospondin motifs 2 (1211 aa).

A signal peptide spans 1–29 (MDPPAGAARRLLCPALLLLLLLLPPPLLP). The propeptide occupies 30–253 (PPPPPANARL…GVLEEHANSS (224 aa)). N-linked (GlcNAc...) asparagine glycosylation is found at N112 and N251. Residues 266-470 (YNIEVLLGVD…HSYDCLLDDP (205 aa)) enclose the Peptidase M12B domain. Disulfide bonds link C343–C392, C386–C465, C425–C451, C492–C517, C503–C526, C512–C545, C539–C550, C573–C610, C577–C615, and C588–C600. H408 lines the Zn(2+) pocket. Residue E409 is part of the active site. Residues H412 and H418 each contribute to the Zn(2+) site. Residues 480 to 560 (QLPGLHYSMN…IWLTPDILKR (81 aa)) form the Disintegrin domain. A TSP type-1 1 domain is found at 561 to 616 (DGSWGAWSPFGSCSRTCGTGVKFRTRQCDNPHPANGGRTCSGLAYDFQLCSRQDCP). The short motif at 691–693 (RGD) is the Cell attachment site element. The segment at 723–851 (KVVKGTFTRS…NVDDNNVLEE (129 aa)) is spacer. 3 consecutive TSP type-1 domains span residues 854–912 (VVYE…NPQE), 914–971 (SQPV…RACS), and 975–1029 (CPGR…GPCP). N-linked (GlcNAc...) asparagine glycans are attached at residues N949 and N993. Cystine bridges form between C987–C1023, C991–C1028, and C1002–C1012. The N-linked (GlcNAc...) asparagine glycan is linked to N1031. Positions 1059–1097 (SKGHCQGDKSIFCRMEVLSRYCSIPGYNKLCCKSCNLYN) constitute a PLAC domain. N-linked (GlcNAc...) asparagine glycosylation is found at N1098, N1145, and N1150. A disordered region spans residues 1170 to 1191 (LEDEVQPPNLIPRRPSPYEKTR).

In terms of assembly, may belong to a multimeric complex. Binds specifically to collagen type XIV. Zn(2+) serves as cofactor. The precursor is cleaved by a furin endopeptidase. In terms of processing, glycosylated. Can be O-fucosylated by POFUT2 on a serine or a threonine residue found within the consensus sequence C1-X(2)-(S/T)-C2-G of the TSP type-1 repeat domains where C1 and C2 are the first and second cysteine residue of the repeat, respectively. Fucosylated repeats can then be further glycosylated by the addition of a beta-1,3-glucose residue by the glucosyltransferase, B3GALTL. Fucosylation mediates the efficient secretion of ADAMTS family members. Can also be C-glycosylated with one or two mannose molecules on tryptophan residues within the consensus sequence W-X-X-W of the TPRs, and N-glycosylated. These other glycosylations can also facilitate secretion. As to expression, expressed at high level in skin, bone, tendon and aorta and at low levels in thymus and brain.

It is found in the secreted. The protein localises to the extracellular space. Its subcellular location is the extracellular matrix. The enzyme catalyses Cleaves the N-propeptide of collagen chain alpha1(I) at Pro-|-Gln and of alpha1(II) and alpha2(I) at Ala-|-Gln.. Its function is as follows. Cleaves the propeptides of type I and II collagen prior to fibril assembly. Does not act on type III collagen. Cleaves lysyl oxidase LOX at a site downstream of its propeptide cleavage site to produce a short LOX form with reduced collagen-binding activity. The chain is A disintegrin and metalloproteinase with thrombospondin motifs 2 (ADAMTS2) from Homo sapiens (Human).